Consider the following 503-residue polypeptide: Cytochrome P450 3A13 (503 aa).

Cysteine 442 provides a ligand contact to heme.

The protein belongs to the cytochrome P450 family. The cofactor is heme.

The protein resides in the endoplasmic reticulum membrane. The protein localises to the microsome membrane. It catalyses the reaction an organic molecule + reduced [NADPH--hemoprotein reductase] + O2 = an alcohol + oxidized [NADPH--hemoprotein reductase] + H2O + H(+). In terms of biological role, can activate aflatoxin B1 to a genotoxic product. This chain is Cytochrome P450 3A13 (Cyp3a13), found in Mus musculus (Mouse).